The chain runs to 361 residues: Phospho-N-acetylmuramoyl-pentapeptide-transferase (361 aa).

The next 10 membrane-spanning stretches (helical) occupy residues glycine 27–leucine 47, threonine 72–alanine 92, leucine 94–phenylalanine 114, leucine 133–glycine 153, phenylalanine 169–glycine 189, glycine 200–valine 220, leucine 240–proline 260, isoleucine 264–alanine 284, isoleucine 289–valine 309, and glutamine 338–leucine 358.

It belongs to the glycosyltransferase 4 family. MraY subfamily. Requires Mg(2+) as cofactor.

The protein localises to the cell inner membrane. The enzyme catalyses UDP-N-acetyl-alpha-D-muramoyl-L-alanyl-gamma-D-glutamyl-meso-2,6-diaminopimeloyl-D-alanyl-D-alanine + di-trans,octa-cis-undecaprenyl phosphate = di-trans,octa-cis-undecaprenyl diphospho-N-acetyl-alpha-D-muramoyl-L-alanyl-D-glutamyl-meso-2,6-diaminopimeloyl-D-alanyl-D-alanine + UMP. Its pathway is cell wall biogenesis; peptidoglycan biosynthesis. Catalyzes the initial step of the lipid cycle reactions in the biosynthesis of the cell wall peptidoglycan: transfers peptidoglycan precursor phospho-MurNAc-pentapeptide from UDP-MurNAc-pentapeptide onto the lipid carrier undecaprenyl phosphate, yielding undecaprenyl-pyrophosphoryl-MurNAc-pentapeptide, known as lipid I. The polypeptide is Phospho-N-acetylmuramoyl-pentapeptide-transferase (Afipia carboxidovorans (strain ATCC 49405 / DSM 1227 / KCTC 32145 / OM5) (Oligotropha carboxidovorans)).